Reading from the N-terminus, the 243-residue chain is R-spondin-2 (243 aa).

Residues Met1 to Cys21 form the signal peptide. 11 cysteine pairs are disulfide-bonded: Cys40–Cys46, Cys43–Cys52, Cys55–Cys74, Cys78–Cys93, Cys96–Cys104, Cys101–Cys110, Cys113–Cys124, Cys128–Cys141, Cys145–Cys187, Cys156–Cys163, and Cys196–Cys203. Residues Met90–Pro134 form an FU repeat. The region spanning Gly144 to Pro204 is the TSP type-1 domain. Residue Asn160 is glycosylated (N-linked (GlcNAc...) asparagine). A disordered region spans residues His202–Gln243. Positions Thr209–Leu224 are enriched in basic residues.

The protein belongs to the R-spondin family. In terms of assembly, binds heparin.

Its subcellular location is the secreted. Activator of the canonical Wnt signaling pathway by acting as a ligand for lgr4-6 receptors. Upon binding to lgr4-6 (lgr4, lgr5 or lgr6), lgr4-6 associate with phosphorylated lrp6 and frizzled receptors that are activated by extracellular Wnt receptors, triggering the canonical Wnt signaling pathway to increase expression of target genes. Acts both in the canonical. Wnt/beta-catenin-dependent pathway and in non-canonical Wnt signaling pathway. Activates neural markers and promotes muscle formation. Overexpression blocks activin, nodal and BMP4 signaling, suggesting that it may negatively regulate the TGF-beta pathway. During embryonic development, plays a crucial role in limb specification, amplifying the Wnt signaling pathway independently of LGR4-6 receptors, possibly by acting as a direct antagonistic ligand to RNF43 and ZNRF3, hence governing the number of limbs an embryo should form. The sequence is that of R-spondin-2 (rspo2) from Xenopus tropicalis (Western clawed frog).